A 242-amino-acid chain; its full sequence is Probable transcriptional regulatory protein STH1004 (242 aa).

It belongs to the TACO1 family.

It localises to the cytoplasm. This chain is Probable transcriptional regulatory protein STH1004, found in Symbiobacterium thermophilum (strain DSM 24528 / JCM 14929 / IAM 14863 / T).